The sequence spans 272 residues: S-adenosylmethionine decarboxylase proenzyme (272 aa).

Residue Ser-117 is the Schiff-base intermediate with substrate; via pyruvic acid of the active site. Ser-117 carries the pyruvic acid (Ser); by autocatalysis modification. His-122 serves as the catalytic Proton acceptor; for processing activity. The active-site Proton donor; for catalytic activity is the Cys-145.

It belongs to the prokaryotic AdoMetDC family. Type 2 subfamily. As to quaternary structure, heterooctamer of four alpha and four beta chains arranged as a tetramer of alpha/beta heterodimers. Pyruvate serves as cofactor. Is synthesized initially as an inactive proenzyme. Formation of the active enzyme involves a self-maturation process in which the active site pyruvoyl group is generated from an internal serine residue via an autocatalytic post-translational modification. Two non-identical subunits are generated from the proenzyme in this reaction, and the pyruvate is formed at the N-terminus of the alpha chain, which is derived from the carboxyl end of the proenzyme. The post-translation cleavage follows an unusual pathway, termed non-hydrolytic serinolysis, in which the side chain hydroxyl group of the serine supplies its oxygen atom to form the C-terminus of the beta chain, while the remainder of the serine residue undergoes an oxidative deamination to produce ammonia and the pyruvoyl group blocking the N-terminus of the alpha chain.

It catalyses the reaction S-adenosyl-L-methionine + H(+) = S-adenosyl 3-(methylsulfanyl)propylamine + CO2. It participates in amine and polyamine biosynthesis; S-adenosylmethioninamine biosynthesis; S-adenosylmethioninamine from S-adenosyl-L-methionine: step 1/1. Functionally, catalyzes the decarboxylation of S-adenosylmethionine to S-adenosylmethioninamine (dcAdoMet), the propylamine donor required for the synthesis of the polyamines spermine and spermidine from the diamine putrescine. The chain is S-adenosylmethionine decarboxylase proenzyme from Halorhodospira halophila (strain DSM 244 / SL1) (Ectothiorhodospira halophila (strain DSM 244 / SL1)).